We begin with the raw amino-acid sequence, 663 residues long: Pyoverdine export ATP-binding/permease protein PvdT (663 aa).

The region spanning 11–250 (IELRDIRKRY…PSAGVERHLQ (240 aa)) is the ABC transporter domain. 48-55 (GASGSGKS) contacts ATP. 4 helical membrane-spanning segments follow: residues 292–312 (ALTL…LAVG), 545–565 (IAAI…LMTV), 598–618 (VVGG…LLLG), and 626–646 (LSAI…FGFM).

Belongs to the ABC transporter superfamily. Macrolide exporter (TC 3.A.1.122) family. Part of the tripartite efflux system PvdRT-OpmQ, which is composed of an inner membrane component with both ATPase and permease domains, PvdT, a periplasmic membrane fusion protein, PvdR, and an outer membrane component, OpmQ.

Its subcellular location is the cell inner membrane. Its function is as follows. Part of the tripartite efflux system PvdRT-OpmQ required for the secretion into the extracellular milieu of the siderophore pyoverdine (PVD), which is involved in iron acquisition. This subunit binds PVD and drives its secretion by hydrolyzing ATP. The system is responsible for export of newly synthesized PVD after the final steps of biosynthesis have taken place in the periplasm. It is also responsible for recycling of PVD after internalization of ferri-PVD into the periplasm by the outer-membrane receptor FpvA and release of iron from PVD, thus making PVD available for new cycles of iron uptake. In addition, can expel unwanted metals complexed with PVD from the periplasm into the extracellular medium. This is Pyoverdine export ATP-binding/permease protein PvdT from Pseudomonas aeruginosa (strain ATCC 15692 / DSM 22644 / CIP 104116 / JCM 14847 / LMG 12228 / 1C / PRS 101 / PAO1).